The chain runs to 964 residues: Protein translocase subunit SecA (964 aa).

Residues Gln86, 104 to 108 (GEGKT), and Asp494 each bind ATP. The disordered stretch occupies residues 846–964 (ETAESADTIA…YKMCHGQNEA (119 aa)). The span at 871 to 882 (AEGEVEEEDEDT) shows a compositional bias: acidic residues. Positions 887-900 (AIAESAAASEAGES) are enriched in low complexity. Residues Cys947, Cys949, Cys958, and His959 each contribute to the Zn(2+) site.

It belongs to the SecA family. Monomer and homodimer. Part of the essential Sec protein translocation apparatus which comprises SecA, SecYEG and auxiliary proteins SecDF. Other proteins may also be involved. Zn(2+) is required as a cofactor.

It is found in the cell membrane. The protein resides in the cytoplasm. It carries out the reaction ATP + H2O + cellular proteinSide 1 = ADP + phosphate + cellular proteinSide 2.. Functionally, part of the Sec protein translocase complex. Interacts with the SecYEG preprotein conducting channel. Has a central role in coupling the hydrolysis of ATP to the transfer of proteins into and across the cell membrane, serving as an ATP-driven molecular motor driving the stepwise translocation of polypeptide chains across the membrane. This Bifidobacterium longum subsp. infantis (strain ATCC 15697 / DSM 20088 / JCM 1222 / NCTC 11817 / S12) protein is Protein translocase subunit SecA.